The primary structure comprises 563 residues: NAD(P)H-quinone oxidoreductase chain 4 (563 aa).

The next 15 membrane-spanning stretches (helical) occupy residues 25-45 (FPWL…VPFI), 56-76 (WFAL…YLYG), 90-110 (VSWL…ISMP), 111-131 (LILL…PVTF), 133-153 (PKLF…VFAV), 157-177 (LLFF…LAIW), 189-209 (FIIY…AMGF), 230-250 (GFQL…LPIV), 264-284 (TAPV…YALM), 298-318 (FAPL…LTSF), 335-355 (MGFV…GAML), 356-376 (QMIS…ATYD), 397-417 (FALW…SGFV), 438-458 (IVIA…LLSM), and 485-505 (VYII…PRLM).

This sequence belongs to the complex I subunit 4 family.

It is found in the cellular thylakoid membrane. It catalyses the reaction a plastoquinone + NADH + (n+1) H(+)(in) = a plastoquinol + NAD(+) + n H(+)(out). The enzyme catalyses a plastoquinone + NADPH + (n+1) H(+)(in) = a plastoquinol + NADP(+) + n H(+)(out). Its function is as follows. NDH-1 shuttles electrons from NAD(P)H, via FMN and iron-sulfur (Fe-S) centers, to quinones in the respiratory chain. The immediate electron acceptor for the enzyme in this species is believed to be plastoquinone. Couples the redox reaction to proton translocation (for every two electrons transferred, four hydrogen ions are translocated across the cytoplasmic membrane), and thus conserves the redox energy in a proton gradient. This Prochlorococcus marinus (strain MIT 9303) protein is NAD(P)H-quinone oxidoreductase chain 4.